Consider the following 196-residue polypeptide: GTP cyclohydrolase-2 (196 aa).

49-53 contributes to the GTP binding site; that stretch reads RIHSE. Cys54, Cys65, and Cys67 together coordinate Zn(2+). Residues Gln70, 92–94, and Thr114 contribute to the GTP site; that span reads EGR. The Proton acceptor role is filled by Asp126. The Nucleophile role is filled by Arg128. Thr149 and Lys154 together coordinate GTP.

The protein belongs to the GTP cyclohydrolase II family. As to quaternary structure, homodimer. Zn(2+) is required as a cofactor.

It carries out the reaction GTP + 4 H2O = 2,5-diamino-6-hydroxy-4-(5-phosphoribosylamino)-pyrimidine + formate + 2 phosphate + 3 H(+). Its pathway is cofactor biosynthesis; riboflavin biosynthesis; 5-amino-6-(D-ribitylamino)uracil from GTP: step 1/4. Catalyzes the conversion of GTP to 2,5-diamino-6-ribosylamino-4(3H)-pyrimidinone 5'-phosphate (DARP), formate and pyrophosphate. This chain is GTP cyclohydrolase-2, found in Hamiltonella defensa subsp. Acyrthosiphon pisum (strain 5AT).